A 260-amino-acid chain; its full sequence is Exosome complex component Rrp42 (260 aa).

This sequence belongs to the RNase PH family. Rrp42 subfamily. Component of the archaeal exosome complex. Forms a hexameric ring-like arrangement composed of 3 Rrp41-Rrp42 heterodimers. The hexameric ring associates with a trimer of Rrp4 and/or Csl4 subunits.

It localises to the cytoplasm. Functionally, non-catalytic component of the exosome, which is a complex involved in RNA degradation. Contributes to the structuring of the Rrp41 active site. The sequence is that of Exosome complex component Rrp42 from Thermoplasma acidophilum (strain ATCC 25905 / DSM 1728 / JCM 9062 / NBRC 15155 / AMRC-C165).